Reading from the N-terminus, the 722-residue chain is Bifunctional UDP-N-acetylglucosamine 2-epimerase/N-acetylmannosamine kinase (722 aa).

Positions 19, 23, 113, 220, and 253 each coordinate UDP. Positions 259, 271, 280, and 281 each coordinate CMP-N-acetyl-beta-neuraminate. Positions 282, 301, 302, 307, and 321 each coordinate UDP. The interval 406–722 (TLSALAVDLG…VLDYTTRRIH (317 aa)) is N-acetylmannosamine kinase. Residue Asp-413 coordinates Mg(2+). Gly-416 contributes to the an N-acyl-D-mannosamine 6-phosphate binding site. The ADP site is built by Thr-417, Asn-418, and Arg-420. Residues Gly-476, Arg-477, Thr-489, Asn-516, Asp-517, and Gly-545 each contribute to the an N-acyl-D-mannosamine 6-phosphate site. 5 residues coordinate an N-acyl-D-mannosamine: Gly-476, Arg-477, Thr-489, Asn-516, and Asp-517. Asp-517 is an active-site residue. Residues Glu-566 and His-569 each coordinate an N-acyl-D-mannosamine. Residue His-569 participates in an N-acyl-D-mannosamine 6-phosphate binding. Positions 569, 579, 581, and 586 each coordinate Zn(2+). Glu-588 serves as a coordination point for an N-acyl-D-mannosamine 6-phosphate. Residue Glu-588 coordinates an N-acyl-D-mannosamine.

This sequence in the N-terminal section; belongs to the UDP-N-acetylglucosamine 2-epimerase family. In the C-terminal section; belongs to the ROK (NagC/XylR) family. Homodimer. Homotetramer. Homohexamer. The hexameric form exhibits both enzyme activities, whereas the dimeric form only catalyzes the phosphorylation of N-acyl-D-mannosamine. Post-translationally, phosphorylated. Phosphorylation by PKC activates the UDP-N-acetylglucosamine 2-epimerase activity.

Its subcellular location is the cytoplasm. The protein resides in the cytosol. It catalyses the reaction UDP-N-acetyl-alpha-D-glucosamine + H2O = aldehydo-N-acetyl-D-mannosamine + UDP + H(+). The catalysed reaction is an N-acyl-D-mannosamine + ATP = an N-acyl-D-mannosamine 6-phosphate + ADP + H(+). Its pathway is amino-sugar metabolism; N-acetylneuraminate biosynthesis. The UDP-N-acetylglucosamine 2-epimerase activity, in contrast to the N-acetylmannosamine kinase activity, exhibits allosteric regulation by cytidine monophosphate-N-acetylneuraminic acid (CMP-Neu5Ac), the end product of neuraminic acid biosynthesis. Moreover, the activity is contingent upon the oligomeric state of the enzyme. The monomeric form is inactive, while the dimeric form selectively catalyzes the phosphorylation of N-acetylmannosamine. The hexameric form, on the other hand, demonstrates full proficiency in both enzyme activities. Furthermore, the UDP-N-acetylglucosamine 2-epimerase activity is increased by PKC-mediated phosphorylation. Bifunctional enzyme that possesses both UDP-N-acetylglucosamine 2-epimerase and N-acetylmannosamine kinase activities, and serves as the initiator of the biosynthetic pathway leading to the production of N-acetylneuraminic acid (NeuAc), a critical precursor in the synthesis of sialic acids. By catalyzing this pivotal and rate-limiting step in sialic acid biosynthesis, this enzyme assumes a pivotal role in governing the regulation of cell surface sialylation, playing a role in embryonic angiogenesis. Sialic acids represent a category of negatively charged sugars that reside on the surface of cells as terminal components of glycoconjugates and mediate important functions in various cellular processes, including cell adhesion, signal transduction, and cellular recognition. The chain is Bifunctional UDP-N-acetylglucosamine 2-epimerase/N-acetylmannosamine kinase (GNE) from Cricetulus griseus (Chinese hamster).